The following is a 385-amino-acid chain: MAEQRITPWDVEVVSTDEVPVAIDYDKIINQFGCEKFNQALADRLEKLSGKPAHYFFRRGIVFAHRDFNLLLDEIANNRPFYLYTGRGPSSKTMHIGHTIPFLLCKYMQDAFKIRLVIQITDDEKFLWKSMRLEDAMAYGRENIKDIVALGFDPKLTYIFSNVEASHHFEENILKISKTINLNEAIKVFGFDMSSNIGQVGFPAKEIAPCFSSSFRFIGKGAMCLVPAAVDQDPFFRLARDKAKALGEKKPSSIYVSLLPDLKGVNRKMSASDPNSSIYLDDAQDTIRKKIIAYAYSGGRKTLEEHREKGGDIDVDVPFEYLKYFLDDDQELEKYRSGYIKGEITSKEMKEKCVVVIQEFVSRYQESRKRVTDDDLRAFIDINKF.

The 'HIGH' region signature appears at Pro89–His98. The 'KMSKS' region motif lies at Lys268 to Ser272.

This sequence belongs to the class-I aminoacyl-tRNA synthetase family. Homodimer.

It carries out the reaction tRNA(Trp) + L-tryptophan + ATP = L-tryptophyl-tRNA(Trp) + AMP + diphosphate + H(+). The polypeptide is Tryptophan--tRNA ligase (Encephalitozoon cuniculi (strain GB-M1) (Microsporidian parasite)).